The primary structure comprises 468 residues: Monogalactosyldiacylglycerol synthase 2, chloroplastic (468 aa).

UDP contacts are provided by residues His-82, Arg-251, 361–365 (GTIAE), and Glu-383.

The protein belongs to the glycosyltransferase 28 family. Expressed mainly in floral buds. Detected in roots, leaves, stems, siliques and pollen tubes.

It localises to the plastid. The protein resides in the chloroplast outer membrane. It carries out the reaction a 1,2-diacyl-sn-glycerol + UDP-alpha-D-galactose = a 1,2-diacyl-3-O-(beta-D-galactosyl)-sn-glycerol + UDP + H(+). The catalysed reaction is 1,2-di-(9Z,12Z-octadecadienoyl)-sn-glycerol + UDP-alpha-D-galactose = 1,2-di-(9Z,12Z-octadecadienoyl)-3-beta-D-galactosyl-sn-glycerol + UDP + H(+). The enzyme catalyses 1-(9Z-octadecenoyl)-2-hexadecanoyl-sn-glycerol + UDP-alpha-D-galactose = 1-(9Z-octadecenoyl)-2-hexadecanoyl-3-beta-D-galactosyl-sn-glycerol + UDP + H(+). It catalyses the reaction 1,2-di-(9Z-octadecenoyl)-sn-glycerol + UDP-alpha-D-galactose = 1,2-di-(9Z-octadecenoyl)-3-beta-D-galactosyl-sn-glycerol + UDP + H(+). Its activity is regulated as follows. Inhibited by galvestine-1. Involved in the synthesis of monogalactosyldiacylglycerol, the major structural component of photosynthetic membranes and in the chloroplast envelope biogenesis. Can use both prokaryotic (18:1/16:0) or eukaryotic (18:2/18:2) 1,2-diacylglycerol species, but operates with some preference for the eukaryotic one. Plays a minor role in galactolipid synthesis in chloroplasts. Is required for membrane lipid remodeling in phosphate-starved roots. Acts as the minor factor involved in digalactosyldiacylglycerol (DGDG) biosynthesis in phosphate-starved roots. Does not seem to be required for plant growth under nutrient-sufficient conditions. Required for membrane lipid remodeling in plants grown in acidic conditions. This is Monogalactosyldiacylglycerol synthase 2, chloroplastic from Arabidopsis thaliana (Mouse-ear cress).